Here is a 151-residue protein sequence, read N- to C-terminus: Class I hydrophobin A (151 aa).

Residues 1 to 17 (MQFSVAAVLALATAVAA) form the signal peptide. Cystine bridges form between Cys52-Cys125, Cys60-Cys119, Cys61-Cys101, and Cys126-Cys144.

Belongs to the fungal hydrophobin family. In terms of assembly, interacts with cutinase cutL1 in a pH-dependent manner. Self-assembles to form functional amyloid fibrils called rodlets. Self-assembly into fibrillar rodlets occurs spontaneously at hydrophobic:hydrophilic interfaces and the rodlets further associate laterally to form amphipathic monolayers. rolA rodlet formation is regulated by the strength of ionic interactions between rolA molecules. Three types of self-assembled structures of rolA are observed: spherical, rod-like, and mesh-like.

It localises to the secreted. The protein localises to the cell wall. In terms of biological role, aerial growth, conidiation, and dispersal of filamentous fungi in the environment rely upon a capability of their secreting small amphipathic proteins called hydrophobins (HPBs) with low sequence identity. Class I can self-assemble into an outermost layer of rodlet bundles on aerial cell surfaces, conferring cellular hydrophobicity that supports fungal growth, development and dispersal; whereas Class II form highly ordered films at water-air interfaces through intermolecular interactions but contribute nothing to the rodlet structure. RolA is a class I hydrophobin that undergoes a conformational change after its adsorption to hydrophobic surfaces such as the biodegradable polyester polybutylene succinate-coadipate (PBSA) and recruits the cutinase cutL1, resulting in condensation of cutL1 on the PBSA surface and consequent stimulation of PBSA hydrolysis. Increases also the activity of polyethylene terephthalate hydrolase (PETase) that hydrolyzes polyethylene terephthalate (PET), one of the most well-known polyesters that is widely used as packaging material, when the PET samples are preincubated with the hydrophobin. The wetting effect of rolA probably acts on PET surface to become hydrophilic, which leads PETase easier to contact and attack the surface. This chain is Class I hydrophobin A, found in Aspergillus oryzae (strain ATCC 42149 / RIB 40) (Yellow koji mold).